Consider the following 348-residue polypeptide: Pheromone P-factor receptor (348 aa).

A run of 7 helical transmembrane segments spans residues 46–69, 79–103, 125–141, 162–180, 207–225, 249–267, and 283–301; these read LLTG…VCLL, VFVF…TICS, VFNI…IFTA, IMTV…FWIT, YFIA…SGVF, CILV…FTII, and CLLI…STAL.

This sequence belongs to the G-protein coupled receptor 4 family.

Its subcellular location is the membrane. Functionally, receptor for the peptide pheromone P-factor, a mating factor of S.pombe. Pheromone signaling is essential for initiation of meiosis in S.pombe; P-factor signaling alone may be sufficient. In Schizosaccharomyces pombe (strain 972 / ATCC 24843) (Fission yeast), this protein is Pheromone P-factor receptor (mam2).